Here is a 366-residue protein sequence, read N- to C-terminus: Flagellar P-ring protein (366 aa).

The N-terminal stretch at 1 to 20 (MVIKFLSALILLLVTTAVQA) is a signal peptide.

It belongs to the FlgI family. As to quaternary structure, the basal body constitutes a major portion of the flagellar organelle and consists of four rings (L,P,S, and M) mounted on a central rod.

Its subcellular location is the periplasm. The protein localises to the bacterial flagellum basal body. Its function is as follows. Assembles around the rod to form the L-ring and probably protects the motor/basal body from shearing forces during rotation. The protein is Flagellar P-ring protein of Escherichia coli O6:H1 (strain CFT073 / ATCC 700928 / UPEC).